We begin with the raw amino-acid sequence, 957 residues long: Dystrophin-related protein 2 (957 aa).

Spectrin repeat units follow at residues 102–179 (DHSG…EELE) and 231–337 (EQLL…QLQD). One can recognise a WW domain in the interval 358 to 383 (WERAISPNKVPYYINHQAQTTCWDHP). The ZZ-type; degenerate zinc-finger motif lies at 605 to 661 (KHQTKCSICRQCPIKGFRYRSLKQFNVDICQTCFLTGRASKGNKLHYPIMEYYTPTT). Residues Cys-610, Cys-613, Cys-634, and Cys-637 each contribute to the Zn(2+) site. Ser-748 bears the Phosphoserine mark. Low complexity predominate over residues 877 to 900 (PPTESDGSGSAGSSLASSPQQSEG). A disordered region spans residues 877–923 (PPTESDGSGSAGSSLASSPQQSEGSHPREKGQTTPDTEAADDVGSKS). Thr-910 carries the phosphothreonine modification.

As to quaternary structure, interacts with PRX; this enhances phosphorylation. Identified in a dystroglycan complex that contains at least PRX, DRP2, UTRN, DMD and DAG1. In terms of tissue distribution, detected in fetal brain.

It localises to the postsynaptic density. The protein resides in the cell projection. Its subcellular location is the dendrite. The protein localises to the perikaryon. It is found in the cell membrane. Its function is as follows. Required for normal myelination and for normal organization of the cytoplasm and the formation of Cajal bands in myelinating Schwann cells. Required for normal PRX location at appositions between the abaxonal surface of the myelin sheath and the Schwann cell plasma membrane. Possibly involved in membrane-cytoskeleton interactions of the central nervous system. In Homo sapiens (Human), this protein is Dystrophin-related protein 2 (DRP2).